The sequence spans 75 residues: Sec-independent protein translocase protein TatA (75 aa).

The chain crosses the membrane as a helical span at residues 1–21; the sequence is MGISIWQLLIVLGIVILLFGT. A disordered region spans residues 41-75; that stretch reads SMSDEEEKNAEQQPLEKQNAEQQAQAEDKPKEKQG. Low complexity predominate over residues 56 to 65; that stretch reads EKQNAEQQAQ. Over residues 66–75 the composition is skewed to basic and acidic residues; sequence AEDKPKEKQG.

This sequence belongs to the TatA/E family. In terms of assembly, the Tat system comprises two distinct complexes: a TatABC complex, containing multiple copies of TatA, TatB and TatC subunits, and a separate TatA complex, containing only TatA subunits. Substrates initially bind to the TatABC complex, which probably triggers association of the separate TatA complex to form the active translocon.

It is found in the cell inner membrane. Its function is as follows. Part of the twin-arginine translocation (Tat) system that transports large folded proteins containing a characteristic twin-arginine motif in their signal peptide across membranes. TatA could form the protein-conducting channel of the Tat system. The sequence is that of Sec-independent protein translocase protein TatA from Marinobacter nauticus (strain ATCC 700491 / DSM 11845 / VT8) (Marinobacter aquaeolei).